The following is a 187-amino-acid chain: Interferon alpha-1/2 (187 aa).

An N-terminal signal peptide occupies residues 1–23 (MALPCSFSVALVLLSCHSLCCLA). Intrachain disulfides connect C24-C122 and C52-C160. The N-linked (GlcNAc...) asparagine glycan is linked to N101.

This sequence belongs to the alpha/beta interferon family.

It is found in the secreted. Its function is as follows. Produced by macrophages, IFN-alpha have antiviral activities. Interferon stimulates the production of two enzymes: a protein kinase and an oligoadenylate synthetase. The polypeptide is Interferon alpha-1/2 (Canis lupus familiaris (Dog)).